We begin with the raw amino-acid sequence, 64 residues long: Myotoxin-2 (64 aa).

Residues 1–21 (KILYLLFAFLFLAFLSEPGNA) form the signal peptide. Cys32 and Cys51 form a disulfide bridge.

It belongs to the crotamine-myotoxin family. As to quaternary structure, monomer. Expressed by the venom gland.

The protein localises to the secreted. Cationic peptide that possesses multiple functions. It acts as a cell-penetrating peptide (CPP), and as a potent voltage-gated potassium channel (Kv) inhibitor. It exhibits antimicrobial activities, hind limb paralysis, and severe muscle necrosis by a non-enzymatic mechanism. The sequence is that of Myotoxin-2 from Crotalus durissus terrificus (South American rattlesnake).